We begin with the raw amino-acid sequence, 275 residues long: Probable histone chaperone asf-1 (275 aa).

Acidic residues-rich tracts occupy residues Glu-157–Asp-166, Asp-183–Leu-207, and Lys-230–Pro-247. Residues Glu-157–Gln-275 form a disordered region. Residues Leu-265–Gln-275 are compositionally biased toward basic and acidic residues.

It belongs to the ASF1 family. In terms of assembly, interacts with histone H3 and histone H4.

It is found in the nucleus. Its function is as follows. Histone chaperone that facilitates histone deposition and histone exchange and removal during nucleosome assembly and disassembly. The sequence is that of Probable histone chaperone asf-1 from Caenorhabditis elegans.